The primary structure comprises 914 residues: Solute carrier family 12 member 9 (914 aa).

Residues 1-36 are Cytoplasmic-facing; it reads MASESSPLLAYRLLGEEGAAFPPNGAGVSGVPSSRK. Position 6 is a phosphoserine (Ser6). A helical transmembrane segment spans residues 37-57; that stretch reads LSTFLGVVVPTVLSMFSIVVF. Residues 58 to 72 lie on the Extracellular side of the membrane; sequence LRIGFVVGHAGLLQA. Residues 73-93 traverse the membrane as a helical segment; that stretch reads LAMLLVAYIILALTVLSVCAI. Residues 94–119 lie on the Cytoplasmic side of the membrane; the sequence is ATNGAVRGGGAYFMISRTLGPEVGGS. The chain crosses the membrane as a helical span at residues 120–140; it reads IGLMFYLANVCGCAVSLLGLV. Topologically, residues 141–167 are extracellular; it reads ESILDVFGADATGSSGIQVLPQGYGWN. The helical transmembrane segment at 168–188 threads the bilayer; it reads LLYGSLLLGLVGGVCTLGAGL. Residues 189-193 are Cytoplasmic-facing; the sequence is YARAS. Residues 194-214 form a helical membrane-spanning segment; it reads FLTFLLVSGSLASVLVSFVAV. The Extracellular segment spans residues 215-262; sequence GPRNIPLAPRPGTNASSVPHRHGHFTGFNGSTLRDNLGAGYAEDYTTG. 2 N-linked (GlcNAc...) asparagine glycosylation sites follow: Asn228 and Asn243. A helical membrane pass occupies residues 263–283; sequence AMMTFASVFAVLFNGCTGIMA. Residues 284–297 lie on the Cytoplasmic side of the membrane; it reads GANMSGELKDPSRA. A helical transmembrane segment spans residues 298-318; the sequence is IPLGTIIAVAYTFFIYILLFF. Residues 319–338 lie on the Extracellular side of the membrane; the sequence is LSSFTCDRALLQEDYGFFRD. A helical transmembrane segment spans residues 339-359; it reads ISLWPPLVLIGIYATALSASM. Topologically, residues 360–376 are cytoplasmic; the sequence is SSLIGASRILHALAQDD. A helical membrane pass occupies residues 377-399; the sequence is LFGVILAPAKVVSGGGNPWGAVL. Over 400–416 the chain is Extracellular; the sequence is YSWGLVQLVLLAGKLNT. A helical membrane pass occupies residues 417-437; sequence LAAVVTVFYLVAYAAVDLSCL. The Cytoplasmic segment spans residues 438–466; it reads SLEWASAPNFRPTFSLFSWHTCLLGVASC. A helical transmembrane segment spans residues 467–487; the sequence is LLMMFLISPGAAGGSLLLMGL. At 488–740 the chain is on the extracellular side; sequence LSALLTARGG…LLRPRGGPGY (253 aa). The tract at residues 645-678 is disordered; the sequence is PAFSEPAEGTREGGSPALSTLFPPPRAPGSPRAL. The chain crosses the membrane as a helical span at residues 741 to 761; sequence VDVCGLFLLQMATILSMVPAW. Topologically, residues 762–914 are cytoplasmic; sequence HSARLRIFLC…GVTPVTCTDL (153 aa). The tract at residues 844–864 is disordered; sequence QGRGTVGGPGGPEGRDGEEGP.

This sequence belongs to the SLC12A transporter family. Interacts with SLC12A1.

The protein resides in the cell membrane. The protein localises to the lysosome membrane. Its function is as follows. May be an inhibitor of SLC12A1. Seems to correspond to a subunit of a multimeric transport system and thus, additional subunits may be required for its function. May play a role in lysosomal ion flux and osmoregulation. This Mus musculus (Mouse) protein is Solute carrier family 12 member 9 (Slc12a9).